The primary structure comprises 203 residues: Glycerol-3-phosphate acyltransferase (203 aa).

Helical transmembrane passes span 7–27 (TLLM…VLVC), 82–102 (AVSL…PVFF), 118–138 (APIG…LLLI), and 141–161 (YSSL…WWLD).

This sequence belongs to the PlsY family. Probably interacts with PlsX.

It localises to the cell inner membrane. It carries out the reaction an acyl phosphate + sn-glycerol 3-phosphate = a 1-acyl-sn-glycero-3-phosphate + phosphate. It participates in lipid metabolism; phospholipid metabolism. Functionally, catalyzes the transfer of an acyl group from acyl-phosphate (acyl-PO(4)) to glycerol-3-phosphate (G3P) to form lysophosphatidic acid (LPA). This enzyme utilizes acyl-phosphate as fatty acyl donor, but not acyl-CoA or acyl-ACP. The sequence is that of Glycerol-3-phosphate acyltransferase from Shewanella baltica (strain OS223).